The sequence spans 735 residues: Trafficking protein particle complex subunit 12 (735 aa).

2 disordered regions span residues 1 to 204 (MEDA…QPSP) and 237 to 276 (NPGA…PPAS). Residues 13–22 (PEAPHPPQLA) are compositionally biased toward pro residues. A compositionally biased stretch (acidic residues) spans 34–50 (ETIDLGGDEFGSEENET). Ser-109 and Ser-184 each carry phosphoserine. TPR repeat units follow at residues 545–578 (GRVM…YPEQ), 580–613 (PQLL…TQKL), 620–653 (IMVL…DPRN), and 654–687 (AVAN…DPRH).

As to quaternary structure, component of the multisubunit TRAPP (transport protein particle) complex, which includes at least TRAPPC2, TRAPPC2L, TRAPPC3, TRAPPC3L, TRAPPC4, TRAPPC5, TRAPPC8, TRAPPC9, TRAPPC10, TRAPPC11 and TRAPPC12. Interacts with CENPE. In terms of processing, phosphorylated as the cells enter mitosis but is dephosphorylated at or before the onset of anaphase. The phosphorylated form recruits CENPE to kinetochores more efficiently than the non-phosphorylated form.

The protein resides in the endoplasmic reticulum-Golgi intermediate compartment. It localises to the nucleus. Functionally, component of the TRAPP complex, which is involved in endoplasmic reticulum to Golgi apparatus trafficking at a very early stage. Also plays a role in chromosome congression, kinetochore assembly and stability and controls the recruitment of CENPE to the kinetochores. The chain is Trafficking protein particle complex subunit 12 from Homo sapiens (Human).